A 153-amino-acid chain; its full sequence is Endoribonuclease YbeY (153 aa).

Positions 112, 116, and 122 each coordinate Zn(2+).

The protein belongs to the endoribonuclease YbeY family. Requires Zn(2+) as cofactor.

It is found in the cytoplasm. Functionally, single strand-specific metallo-endoribonuclease involved in late-stage 70S ribosome quality control and in maturation of the 3' terminus of the 16S rRNA. This Persephonella marina (strain DSM 14350 / EX-H1) protein is Endoribonuclease YbeY.